Here is a 1163-residue protein sequence, read N- to C-terminus: Integrin alpha-X (1163 aa).

The N-terminal stretch at methionine 1–glycine 19 is a signal peptide. The Extracellular segment spans residues phenylalanine 20 to proline 1107. 2 FG-GAP repeats span residues aspartate 23–proline 78 and isoleucine 79–leucine 138. Asparagine 61 carries an N-linked (GlcNAc...) asparagine glycan. Cysteine 69 and cysteine 76 are oxidised to a cystine. A glycan (N-linked (GlcNAc...) asparagine) is linked at asparagine 89. Intrachain disulfides connect cysteine 108-cysteine 126 and cysteine 116-cysteine 145. The Mg(2+) site is built by aspartate 157, serine 159, serine 161, and aspartate 259. Residues arginine 165–threonine 339 form the VWFA domain. FG-GAP repeat units follow at residues glutamate 340–isoleucine 391, asparagine 392–tryptophan 443, arginine 444–tryptophan 504, aspartate 507–serine 565, and glutamine 570–alanine 630. An N-linked (GlcNAc...) asparagine glycan is attached at asparagine 392. Ca(2+) is bound by residues aspartate 466, aspartate 468, aspartate 470, and aspartate 474. Cysteine 495 and cysteine 506 form a disulfide bridge. Residues aspartate 530, asparagine 532, aspartate 534, aspartate 538, aspartate 593, aspartate 597, and aspartate 601 each coordinate Ca(2+). 2 cysteine pairs are disulfide-bonded: cysteine 639-cysteine 722 and cysteine 655-cysteine 712. Asparagine 697 and asparagine 735 each carry an N-linked (GlcNAc...) asparagine glycan. 2 disulfide bridges follow: cysteine 771–cysteine 777 and cysteine 848–cysteine 863. 2 N-linked (GlcNAc...) asparagine glycosylation sites follow: asparagine 899 and asparagine 939. 2 cysteine pairs are disulfide-bonded: cysteine 998–cysteine 1022 and cysteine 1027–cysteine 1032. The N-linked (GlcNAc...) asparagine glycan is linked to asparagine 1050. Residues leucine 1108 to tyrosine 1128 traverse the membrane as a helical segment. The Cytoplasmic segment spans residues lysine 1129–lysine 1163. The GFFKR motif motif lies at glycine 1131–arginine 1135.

It belongs to the integrin alpha chain family. As to quaternary structure, heterodimer of an alpha and a beta subunit. Alpha-X associates with beta-2. Predominantly expressed in monocytes and granulocytes.

Its subcellular location is the membrane. In terms of biological role, integrin alpha-X/beta-2 is a receptor for fibrinogen. It recognizes the sequence G-P-R in fibrinogen. It mediates cell-cell interaction during inflammatory responses. It is especially important in monocyte adhesion and chemotaxis. This chain is Integrin alpha-X (ITGAX), found in Homo sapiens (Human).